The chain runs to 264 residues: tRNA (guanine-N(1)-)-methyltransferase (264 aa).

S-adenosyl-L-methionine-binding positions include G125 and 145-150 (LGDFVL).

It belongs to the RNA methyltransferase TrmD family. In terms of assembly, homodimer.

The protein localises to the cytoplasm. It catalyses the reaction guanosine(37) in tRNA + S-adenosyl-L-methionine = N(1)-methylguanosine(37) in tRNA + S-adenosyl-L-homocysteine + H(+). Its function is as follows. Specifically methylates guanosine-37 in various tRNAs. The polypeptide is tRNA (guanine-N(1)-)-methyltransferase (Burkholderia ambifaria (strain MC40-6)).